A 303-amino-acid polypeptide reads, in one-letter code: Monoglyceride lipase (303 aa).

At T10 the chain carries Phosphothreonine. At Y58 the chain carries 3'-nitrotyrosine. S122 acts as the Nucleophile in catalysis. Active-site charge relay system residues include D239 and H269.

The protein belongs to the AB hydrolase superfamily. Monoacylglycerol lipase family. Homodimer. In terms of tissue distribution, detected in adipose tissue, lung, liver, kidney, brain and heart.

It is found in the cytoplasm. The protein localises to the cytosol. Its subcellular location is the membrane. It catalyses the reaction Hydrolyzes glycerol monoesters of long-chain fatty acids.. The catalysed reaction is a 1-acylglycerol + H2O = glycerol + a fatty acid + H(+). It carries out the reaction a 2-acylglycerol + H2O = glycerol + a fatty acid + H(+). The enzyme catalyses 1-octanoylglycerol + H2O = octanoate + glycerol + H(+). It catalyses the reaction 2-(5Z,8Z,11Z,14Z-eicosatetraenoyl)-glycerol + H2O = glycerol + (5Z,8Z,11Z,14Z)-eicosatetraenoate + H(+). The catalysed reaction is 1-decanoylglycerol + H2O = decanoate + glycerol + H(+). It carries out the reaction 1-dodecanoylglycerol + H2O = dodecanoate + glycerol + H(+). The enzyme catalyses 1-tetradecanoylglycerol + H2O = tetradecanoate + glycerol + H(+). It catalyses the reaction 2-hexadecanoylglycerol + H2O = glycerol + hexadecanoate + H(+). The catalysed reaction is 1-(9Z-octadecenoyl)-glycerol + H2O = glycerol + (9Z)-octadecenoate + H(+). It carries out the reaction 2-(9Z-octadecenoyl)-glycerol + H2O = glycerol + (9Z)-octadecenoate + H(+). The enzyme catalyses 2-(9Z,12Z-octadecadienoyl)-glycerol + H2O = (9Z,12Z)-octadecadienoate + glycerol + H(+). It catalyses the reaction 1-(5Z,8Z,11Z,14Z-eicosatetraenoyl)-glycerol + H2O = glycerol + (5Z,8Z,11Z,14Z)-eicosatetraenoate + H(+). The catalysed reaction is 1-(9Z,12Z-octadecadienoyl)-glycerol + H2O = (9Z,12Z)-octadecadienoate + glycerol + H(+). It carries out the reaction 1-hexadecanoylglycerol + H2O = glycerol + hexadecanoate + H(+). The enzyme catalyses 1-octadecanoylglycerol + H2O = octadecanoate + glycerol + H(+). It catalyses the reaction prostaglandin E2 1-glyceryl ester + H2O = prostaglandin E2 + glycerol + H(+). The catalysed reaction is prostaglandin D2-1-glycerol ester + H2O = prostaglandin D2 + glycerol + H(+). It carries out the reaction 2-glyceryl-15-deoxy-Delta(12,14)-prostaglandin J2 + H2O = 15-deoxy-Delta(12,14)-prostaglandin J2 + glycerol + H(+). The enzyme catalyses prostaglandin F2alpha 1-glyceryl ester + H2O = prostaglandin F2alpha + glycerol + H(+). The protein operates within glycerolipid metabolism; triacylglycerol degradation. Functionally, converts monoacylglycerides to free fatty acids and glycerol. Hydrolyzes the endocannabinoid 2-arachidonoylglycerol, and thereby contributes to the regulation of endocannabinoid signaling, nociperception and perception of pain. Regulates the levels of fatty acids that serve as signaling molecules and promote cancer cell migration, invasion and tumor growth. The chain is Monoglyceride lipase from Homo sapiens (Human).